Consider the following 497-residue polypeptide: Tripartite motif-containing protein 5 (497 aa).

A2 carries the post-translational modification N-acetylalanine. The RING-type zinc finger occupies 15–60 (CPICLELLTEPLSLHCGHSFCQACITANHKKSMLYKEGERSCPVCR). S87 is modified (phosphoserine). A B box-type zinc finger spans residues 92 to 133 (QKVDHCARHGEKLLLFCQEDSKVICWLCERSQEHRGHHTFLM). 4 residues coordinate Zn(2+): C97, H100, C119, and H125. The stretch at 137–225 (AQEYHVKLQT…LTKSETEMVQ (89 aa)) forms a coiled coil. The tract at residues 187-200 (FEQLREILDWEESN) is required for interaction with GABARAP and for autophagy. In terms of domain architecture, B30.2/SPRY spans 283 to 497 (LKGMLDMFRE…VPMTLCSPSS (215 aa)).

It belongs to the TRIM/RBCC family. In terms of assembly, can form homodimers and homotrimers. In addition to lower-order dimerization, also exhibits a higher-order multimerization and both low- and high-order multimerizations are essential for its restriction activity. Interacts with MAP3K7/TAK1, TAB2 and TAB3. Interacts with HSPA8/HSC70, PSMC2, PSMC4, PSMC5 and PSMD7. Interacts with SQSTM1. Interacts (via B30.2/SPRY domain) with HSPA1A/B. Interacts with TRIM6 and TRIM34. Interacts with BECN1; GABARAP. Interacts with ULK1 (phosphorylated form), GABARAPL1, GABARAPL2, MAP1LC3A and MAP1LC3C. Post-translationally, degraded in a proteasome-independent fashion in the absence of viral infection but in a proteasome-dependent fashion following exposure to restriction sensitive virus. Autoubiquitinated in a RING finger- and UBE2D2-dependent manner. Monoubiquitinated by TRIM21. Deubiquitinated by Yersinia YopJ. Ubiquitination may not lead to proteasomal degradation.

Its subcellular location is the cytoplasm. The protein resides in the nucleus. The catalysed reaction is S-ubiquitinyl-[E2 ubiquitin-conjugating enzyme]-L-cysteine + [acceptor protein]-L-lysine = [E2 ubiquitin-conjugating enzyme]-L-cysteine + N(6)-ubiquitinyl-[acceptor protein]-L-lysine.. Its pathway is protein modification; protein ubiquitination. In terms of biological role, capsid-specific restriction factor that prevents infection from non-host-adapted retroviruses. Blocks viral replication early in the life cycle, after viral entry but before reverse transcription. In addition to acting as a capsid-specific restriction factor, also acts as a pattern recognition receptor that activates innate immune signaling in response to the retroviral capsid lattice. Binding to the viral capsid triggers its E3 ubiquitin ligase activity, and in concert with the heterodimeric ubiquitin conjugating enzyme complex UBE2V1-UBE2N (also known as UBC13-UEV1A complex) generates 'Lys-63'-linked polyubiquitin chains, which in turn are catalysts in the autophosphorylation of the MAP3K7/TAK1 complex (includes TAK1, TAB2, and TAB3). Activation of the MAP3K7/TAK1 complex by autophosphorylation results in the induction and expression of NF-kappa-B and MAPK-responsive inflammatory genes, thereby leading to an innate immune response in the infected cell. Restricts infection by human immunodeficiency virus type 1 (HIV-1) and simian immunodeficiency virus (SIV-agm). Plays a role in regulating autophagy through activation of autophagy regulator BECN1 by causing its dissociation from its inhibitors BCL2 and TAB2. Also plays a role in autophagy by acting as a selective autophagy receptor which recognizes and targets HIV-1 capsid protein p24 for autophagic destruction. This Macaca mulatta (Rhesus macaque) protein is Tripartite motif-containing protein 5 (TRIM5).